We begin with the raw amino-acid sequence, 332 residues long: Large ribosomal subunit protein mL44 (332 aa).

The transit peptide at 1–30 (MASGLTRLLLRGPRCLLATAGLTLIPPVRG) directs the protein to the mitochondrion. An RNase III domain is found at 86 to 228 (DLLKTAFVNS…LITQMTGKEL (143 aa)). The DRBM domain maps to 236–306 (NPMGLLVQEL…ARVALRKLYG (71 aa)).

The protein belongs to the ribonuclease III family. Mitochondrion-specific ribosomal protein mL44 subfamily. In terms of assembly, component of the mitochondrial ribosome large subunit (39S) which comprises a 16S rRNA and about 50 distinct proteins.

The protein resides in the mitochondrion. Its function is as follows. Component of the 39S subunit of mitochondrial ribosome. May have a function in the assembly/stability of nascent mitochondrial polypeptides exiting the ribosome. In Bos taurus (Bovine), this protein is Large ribosomal subunit protein mL44 (MRPL44).